Consider the following 460-residue polypeptide: Probable lipid II flippase MurJ (460 aa).

The next 11 helical transmembrane spans lie at 4 to 24 (ILGAGVYSDIFFVAFKLPNLF), 50 to 70 (FASLVGLIFCGVLFMWCLLVA), 95 to 115 (IVAINFWYLLLVFITTFLGAL), 122 to 142 (FFASAYSASLLNLCMILALLI), 155 to 175 (LSYGVLLGGVAQILLHFYPLV), 228 to 248 (IASFLDTTIASFLASGSVSYL), 257 to 277 (LPLALFAIAISTALFPSIAIA), 292 to 312 (KAWFFLVGVLLLCSIGGIMLS), 336 to 356 (VFSLYLLGLLPFGLTKLFSLW), 366 to 386 (AAKISLISLFLGLAASLSLMP), and 428 to 448 (LVILFLACVEILLLLAFKSWV).

The protein belongs to the MurJ/MviN family.

It localises to the cell inner membrane. The protein operates within cell wall biogenesis; peptidoglycan biosynthesis. In terms of biological role, involved in peptidoglycan biosynthesis. Transports lipid-linked peptidoglycan precursors from the inner to the outer leaflet of the cytoplasmic membrane. This Helicobacter pylori (strain J99 / ATCC 700824) (Campylobacter pylori J99) protein is Probable lipid II flippase MurJ.